We begin with the raw amino-acid sequence, 749 residues long: Amyloid-beta A4 precursor protein-binding family A member 2 (749 aa).

Disordered stretches follow at residues methionine 1–glutamate 94 and aspartate 130–proline 343. Serine 11 bears the Phosphoserine mark. The span at glycine 70–threonine 80 shows a compositional bias: polar residues. Composition is skewed to acidic residues over residues serine 81 to glutamate 94 and threonine 131 to threonine 142. The interval histidine 185–alanine 270 is STXBP1-binding. Serine 208 bears the Phosphoserine mark. The segment covering aspartate 218–aspartate 227 has biased composition (acidic residues). The span at leucine 237–glutamate 247 shows a compositional bias: polar residues. Positions arginine 305 to histidine 315 are enriched in basic and acidic residues. A PID domain is found at leucine 366 to aspartate 555. 2 consecutive PDZ domains span residues glutamate 568–serine 653 and threonine 659–alanine 735.

In terms of assembly, part of a multimeric complex containing STXBP1 and syntaxin-1. Binds to the cytoplasmic domain of amyloid-beta protein, and to the nuclear factor NF-kappa-B/p65 via its PDZ domain. Interacts with the N-terminal domain of NECAB3.

Its function is as follows. Putative function in synaptic vesicle exocytosis by binding to STXBP1, an essential component of the synaptic vesicle exocytotic machinery. May modulate processing of the amyloid-beta precursor protein (APP) and hence formation of APP-beta. This is Amyloid-beta A4 precursor protein-binding family A member 2 (APBA2) from Pongo abelii (Sumatran orangutan).